A 287-amino-acid polypeptide reads, in one-letter code: uncharacterized protein (287 aa).

It belongs to the A.longa ORF167/ORF288 family.

It localises to the plastid. This is an uncharacterized protein from Euglena longa (Euglenophycean alga).